Reading from the N-terminus, the 204-residue chain is Large ribosomal subunit protein eL15 (204 aa).

Belongs to the eukaryotic ribosomal protein eL15 family. Component of the large ribosomal subunit.

It is found in the cytoplasm. Functionally, component of the large ribosomal subunit. The ribosome is a large ribonucleoprotein complex responsible for the synthesis of proteins in the cell. This is Large ribosomal subunit protein eL15 (rpl15) from Silurus asotus (Amur catfish).